Here is a 698-residue protein sequence, read N- to C-terminus: Auxin response factor 22 (698 aa).

The TF-B3 DNA-binding region spans 128–230 (FAKTLTQSDA…ELCVGIRRAK (103 aa)). Polar residues predominate over residues 549-577 (TSSGSTETLSPGVTGNSSPNGNAHKTGNA). The segment at 549–579 (TSSGSTETLSPGVTGNSSPNGNAHKTGNASD) is disordered. The PB1 domain maps to 603-683 (AGHCKVFMES…RRLTIIAGDR (81 aa)).

Belongs to the ARF family. In terms of assembly, homodimers and heterodimers. As to expression, expressed in roots, culms, leaves and young panicles.

It localises to the nucleus. Functionally, auxin response factors (ARFs) are transcriptional factors that bind specifically to the DNA sequence 5'-TGTCTC-3' found in the auxin-responsive promoter elements (AuxREs). This Oryza sativa subsp. japonica (Rice) protein is Auxin response factor 22 (ARF22).